The sequence spans 148 residues: FAD synthase (148 aa).

ATP contacts are provided by residues 14-15, 19-22, and Asp100; these read VF and HAGH.

The protein belongs to the archaeal FAD synthase family. In terms of assembly, homodimer. A divalent metal cation serves as cofactor.

It carries out the reaction FMN + ATP + H(+) = FAD + diphosphate. Its pathway is cofactor biosynthesis; FAD biosynthesis; FAD from FMN: step 1/1. Functionally, catalyzes the transfer of the AMP portion of ATP to flavin mononucleotide (FMN) to produce flavin adenine dinucleotide (FAD) coenzyme. This is FAD synthase from Pyrococcus horikoshii (strain ATCC 700860 / DSM 12428 / JCM 9974 / NBRC 100139 / OT-3).